Consider the following 729-residue polypeptide: Leucine-rich repeat flightless-interacting protein 2 (729 aa).

Positions Ile27–Trp69 form a coiled coil. 3 disordered regions span residues Asp80–His156, Ser230–Ala268, and Ile289–Asp344. Residues His84–Ser93 show a composition bias toward basic residues. A compositionally biased stretch (polar residues) spans Val99–Val110. Basic and acidic residues predominate over residues Arg115–Ser126. Composition is skewed to low complexity over residues Arg137–Asp147 and Ser257–Ala268. A compositionally biased stretch (polar residues) spans Thr304 to Ile320. Coiled coils occupy residues Asp357–Lys531 and Leu574–Arg722. The disordered stretch occupies residues Asp600–Asn621. Polar residues predominate over residues Ala607–Pro616.

The protein belongs to the LRRFIP family.

Its function is as follows. May function as activator of the canonical Wnt signaling pathway upstream of ctnnb1/beta-catenin. Might be required for dorsal axis formation. This is Leucine-rich repeat flightless-interacting protein 2 (lrrfip2) from Xenopus laevis (African clawed frog).